The following is a 511-amino-acid chain: V-type proton ATPase subunit B (511 aa).

Arg381 lines the ATP pocket. A disordered region spans residues 484–511; that stretch reads FYGRDREQDDDEEEEEDPDKSGDKLIDA. A compositionally biased stretch (acidic residues) spans 491-501; sequence QDDDEEEEEDP. Positions 502-511 are enriched in basic and acidic residues; sequence DKSGDKLIDA.

It belongs to the ATPase alpha/beta chains family. In terms of assembly, V-ATPase is a heteromultimeric enzyme composed of a peripheral catalytic V1 complex (components A to H) attached to an integral membrane V0 proton pore complex (components: a, c, c', c'', d, e, f and VOA1).

The protein localises to the vacuole membrane. In terms of biological role, non-catalytic subunit of the V1 complex of vacuolar(H+)-ATPase (V-ATPase), a multisubunit enzyme composed of a peripheral complex (V1) that hydrolyzes ATP and a membrane integral complex (V0) that translocates protons. V-ATPase is responsible for acidifying and maintaining the pH of intracellular compartments. The protein is V-type proton ATPase subunit B (VMA2) of Candida tropicalis (Yeast).